The following is a 785-amino-acid chain: MAAKLQDLELSSEEVDRFSKAFKDPTFREMFIQYAEEISDPENRKKYEQEIYKMENERGMDIKFIHPKPGYVLLSSVNGVQKCYLNICSNDLIQKPEFKPGKDGEGKAGLHWSLPYSLSPGRDDLSKDWSKHVIYDVVFHPDTLHIASKNGKFKGIVDSTALEAVASQFNVTLDKANVRTLSMKYKGVPNPSVLRKPLPEASPKSRDLEDPLCFPYPYDVPTAVGTEKKDQKRVIQKECKQHLVTPEQDPNVQVAATPNYTVRHRSYVDLQDFRDSRDSTPSPVPKELVITVDLPLLNSAAGVNLHIAGKNLSLESEKPAYKLNVKLPYAVEDNQGKAQFNKVKKQLIITVPVIQHNILSLMQDHFQEARGEKDNQNKAEHSVLNKEHTDNSGITSARGTEKLLELEEENQFEGLASISSMDTGASHLPEILPNLNTFGKEQVVNQMNEDTPNVPTDNLVCPTFTCSQDPTSLTLIVHVRDIDENSICADVGSNHYHIRCYRKQSRAFYDLLVTFLPHDIIISNEVSVNISEDNVVIGLTKCPESFGFWKKLYFGVSGQSLQERRFVIEENINKVLACSIPLSQVSPSIQEHQPLIEVLEMTDEKTHIRLNEPKIEYVDSAEHNEQCTDHSESERDTSLELPNVDGKDSAEQCSSQVSPCKHNIELGREHTSERDKEPKPTSCTAESTSGQQPNDSHLVCPGDNCAQDSNAENKMACLKSSVQTTQESDLDEDDMPDNSDHLQNSASSNNILKEISSKDGSVQVISDHTTHCPFQFQNSLLFELD.

Basic and acidic residues-rich tracts occupy residues 622-638 and 662-679; these read EHNE…RDTS and HNIE…KEPK. 2 disordered regions span residues 622–698 and 719–749; these read EHNE…DSHL and KSSV…ASSN. Polar residues predominate over residues 681-695; it reads TSCTAESTSGQQPND. Residues 728–737 are compositionally biased toward acidic residues; sequence SDLDEDDMPD.

The protein belongs to the PIH1 family. Kintoun subfamily.

The protein localises to the cytoplasm. It is found in the dynein axonemal particle. Required for cytoplasmic pre-assembly of axonemal dyneins, thereby playing a central role in motility in cilia and flagella. Involved in pre-assembly of dynein arm complexes in the cytoplasm before intraflagellar transport loads them for the ciliary compartment. In Xenopus tropicalis (Western clawed frog), this protein is Protein kintoun.